The chain runs to 188 residues: uncharacterized protein (188 aa).

Helical transmembrane passes span 6–26 (MIVF…SLPL), 43–63 (FAGR…ILFA), and 110–130 (ALFL…MIAA).

Its subcellular location is the membrane. This is an uncharacterized protein from Schizosaccharomyces pombe (strain 972 / ATCC 24843) (Fission yeast).